Here is a 298-residue protein sequence, read N- to C-terminus: Olfactory receptor 52Z1P (298 aa).

The Extracellular segment spans residues 1 to 14; the sequence is MGIPGLEGLHTWIS. Residues 15–35 form a helical membrane-spanning segment; it reads IPFSFMYIVAVAGNIFLIFLI. Over 36 to 43 the chain is Cytoplasmic; sequence MTERSLHE. Residues 44–64 form a helical membrane-spanning segment; that stretch reads PMYLFLSMLASADFLLATAAA. The Extracellular portion of the chain corresponds to 65–85; sequence PKVLAILWFHSMDISFGSCVS. C83 and C164 are disulfide-bonded. A helical transmembrane segment spans residues 86-106; the sequence is QMFFIHFIFVAESAILLAMAF. Residues 107–128 lie on the Cytoplasmic side of the membrane; that stretch reads DRYVAICYPLRYTILTSSAVRK. A helical transmembrane segment spans residues 129-149; the sequence is IGIAAVVRSFFICCPFIFLVY. The Extracellular portion of the chain corresponds to 150–178; that stretch reads RLTYCGRNIIPHSYCEHIARLACGNINVN. Residues 179 to 199 form a helical membrane-spanning segment; that stretch reads IIYGLTVALLSTGLDIVLIII. Topologically, residues 200–223 are cytoplasmic; it reads SYTMILHSVFQISSWAARFKALST. A helical membrane pass occupies residues 224-244; sequence CGSHICVIFMFYTPAFFSFLA. Residues 245–257 are Extracellular-facing; sequence HRFGGKTIPHHIH. The chain crosses the membrane as a helical span at residues 258 to 278; it reads ILVGSLYVLVPPMLNPIIYGV. Over 279–298 the chain is Cytoplasmic; it reads KTKQIKDRVILLFSPISVCC.

Belongs to the G-protein coupled receptor 1 family.

The protein localises to the cell membrane. Functionally, odorant receptor. This chain is Olfactory receptor 52Z1P, found in Homo sapiens (Human).